The chain runs to 208 residues: Floral homeotic protein PISTILLATA (208 aa).

One can recognise an MADS-box domain in the interval Arg3–Tyr57. Residues Ser75–Asn117 are a coiled coil. The 87-residue stretch at His84–Ala170 folds into the K-box domain.

In terms of assembly, forms a heterodimer with APETALA3, capable of binding to CArG-box sequences. AP3/PI heterodimer binds AP1 or SEP3 to form a ternary complex.

The protein localises to the nucleus. In terms of biological role, probable transcription factor involved in the genetic control of flower development. Is required for normal development of petals and stamens in the wild-type flower. Forms a heterodimer with APETALA3 that is required for autoregulation of both AP3 and PI genes. AP3/PI heterodimer interacts with APETALA1 or SEPALLATA3 to form a ternary complex that could be responsible for the regulation of the genes involved in the flower development. AP3/PI heterodimer activates the expression of NAP. AP3/PI prevents GATA22/GNL and GATA21/GNC expression. The chain is Floral homeotic protein PISTILLATA (PI) from Arabidopsis thaliana (Mouse-ear cress).